Consider the following 205-residue polypeptide: Holliday junction branch migration complex subunit RuvA (205 aa).

A domain I region spans residues 1 to 65 (MIGRLRGAVA…SAGLRLYGFL (65 aa)). The tract at residues 66–144 (TREDRRAFVL…TDGPVLMSAP (79 aa)) is domain II. The tract at residues 145-153 (TSSAPSAPA) is flexible linker. Residues 153-205 (AKPAPTGDAVAALMGLGVAEVNARRVVEAAAAELGEEATVQALIKAGLKELGR) form a domain III region.

It belongs to the RuvA family. In terms of assembly, homotetramer. Forms an RuvA(8)-RuvB(12)-Holliday junction (HJ) complex. HJ DNA is sandwiched between 2 RuvA tetramers; dsDNA enters through RuvA and exits via RuvB. An RuvB hexamer assembles on each DNA strand where it exits the tetramer. Each RuvB hexamer is contacted by two RuvA subunits (via domain III) on 2 adjacent RuvB subunits; this complex drives branch migration. In the full resolvosome a probable DNA-RuvA(4)-RuvB(12)-RuvC(2) complex forms which resolves the HJ.

The protein localises to the cytoplasm. Functionally, the RuvA-RuvB-RuvC complex processes Holliday junction (HJ) DNA during genetic recombination and DNA repair, while the RuvA-RuvB complex plays an important role in the rescue of blocked DNA replication forks via replication fork reversal (RFR). RuvA specifically binds to HJ cruciform DNA, conferring on it an open structure. The RuvB hexamer acts as an ATP-dependent pump, pulling dsDNA into and through the RuvAB complex. HJ branch migration allows RuvC to scan DNA until it finds its consensus sequence, where it cleaves and resolves the cruciform DNA. This chain is Holliday junction branch migration complex subunit RuvA, found in Caulobacter vibrioides (strain ATCC 19089 / CIP 103742 / CB 15) (Caulobacter crescentus).